The sequence spans 261 residues: Cytochrome c oxidase subunit 3 (261 aa).

The Mitochondrial matrix segment spans residues 1-15 (MTHQTHAYHMVNPSP). A helical transmembrane segment spans residues 16–34 (WPLTGALSALLMTSGLIMW). The Mitochondrial intermembrane portion of the chain corresponds to 35–40 (FHYNSM). The helical transmembrane segment at 41-66 (ALLTLGFTTNLLTMYQWWRDVIREGT) threads the bilayer. Residues 67–72 (FQGHHT) are Mitochondrial matrix-facing. The helical transmembrane segment at 73–105 (PIVQKGLRYGMVLFIVSEVFFFAGFFWAFYHSS) threads the bilayer. Over 106–128 (LAPTPELGGCWPPTGIIPLNPLE) the chain is Mitochondrial intermembrane. The helical transmembrane segment at 129–152 (VPLLNTSVLLASGVSITWAHHSLM) threads the bilayer. Topologically, residues 153-155 (EGN) are mitochondrial matrix. A helical transmembrane segment spans residues 156-183 (RKHMLQALFITISLGVYFTLLQASEYYE). Residues 184–190 (TSFTISD) lie on the Mitochondrial intermembrane side of the membrane. Residues 191–223 (GVYGSTFFMATGFHGLHVIIGSTFLIVCFLRQL) traverse the membrane as a helical segment. The Mitochondrial matrix portion of the chain corresponds to 224–232 (YYHFTSNHH). The helical transmembrane segment at 233-256 (FGFEAAAWYWHFVDVVWLFLYVSI) threads the bilayer. The Mitochondrial intermembrane segment spans residues 257–261 (YWWGS).

Belongs to the cytochrome c oxidase subunit 3 family. In terms of assembly, component of the cytochrome c oxidase (complex IV, CIV), a multisubunit enzyme composed of 14 subunits. The complex is composed of a catalytic core of 3 subunits MT-CO1, MT-CO2 and MT-CO3, encoded in the mitochondrial DNA, and 11 supernumerary subunits COX4I, COX5A, COX5B, COX6A, COX6B, COX6C, COX7A, COX7B, COX7C, COX8 and NDUFA4, which are encoded in the nuclear genome. The complex exists as a monomer or a dimer and forms supercomplexes (SCs) in the inner mitochondrial membrane with NADH-ubiquinone oxidoreductase (complex I, CI) and ubiquinol-cytochrome c oxidoreductase (cytochrome b-c1 complex, complex III, CIII), resulting in different assemblies (supercomplex SCI(1)III(2)IV(1) and megacomplex MCI(2)III(2)IV(2)).

The protein resides in the mitochondrion inner membrane. The catalysed reaction is 4 Fe(II)-[cytochrome c] + O2 + 8 H(+)(in) = 4 Fe(III)-[cytochrome c] + 2 H2O + 4 H(+)(out). Component of the cytochrome c oxidase, the last enzyme in the mitochondrial electron transport chain which drives oxidative phosphorylation. The respiratory chain contains 3 multisubunit complexes succinate dehydrogenase (complex II, CII), ubiquinol-cytochrome c oxidoreductase (cytochrome b-c1 complex, complex III, CIII) and cytochrome c oxidase (complex IV, CIV), that cooperate to transfer electrons derived from NADH and succinate to molecular oxygen, creating an electrochemical gradient over the inner membrane that drives transmembrane transport and the ATP synthase. Cytochrome c oxidase is the component of the respiratory chain that catalyzes the reduction of oxygen to water. Electrons originating from reduced cytochrome c in the intermembrane space (IMS) are transferred via the dinuclear copper A center (CU(A)) of subunit 2 and heme A of subunit 1 to the active site in subunit 1, a binuclear center (BNC) formed by heme A3 and copper B (CU(B)). The BNC reduces molecular oxygen to 2 water molecules using 4 electrons from cytochrome c in the IMS and 4 protons from the mitochondrial matrix. The protein is Cytochrome c oxidase subunit 3 (MT-CO3) of Canis lupus familiaris (Dog).